The primary structure comprises 572 residues: 3-ketosteroid oxygenase (572 aa).

2 consecutive transmembrane segments (helical) span residues A52–L72 and Y84–I104.

The protein belongs to the cytochrome P450 family. As to expression, expressed in the 2 embryonic head hypodermal cells XXXL/R.

Its subcellular location is the membrane. It catalyses the reaction 5alpha-cholest-7-en-3-one + 3 reduced [NADPH--hemoprotein reductase] + 3 O2 = (25S)-Delta7-dafachronate + 3 oxidized [NADPH--hemoprotein reductase] + 4 H2O + 4 H(+). The catalysed reaction is cholest-4-en-3-one + 3 reduced [NADPH--hemoprotein reductase] + 3 O2 = (25S)-3-oxocholest-4-en-26-oate + 3 oxidized [NADPH--hemoprotein reductase] + 4 H2O + 4 H(+). It functions in the pathway steroid hormone biosynthesis; dafachronic acid biosynthesis. In terms of biological role, converts the 3-keto steroids 4-cholesten-3-one and lathosterone into the carboxylic metabolites 3-keto-4-cholestenate (Delta(4)-dafachronic acid, Delta(4)-DA) and 3-keto-7,(5a)-cholestenate (Delta(7)-dafachronic acid, Delta(7)-DA) respectively, by catalyzing successive oxidations at C-26. Dafachronic acids bind directly to the nuclear hormone receptor (NHR) DAF-12, suppressing dauer formation and inducing reproductive growth. In a non-cell autonomous manner, negatively regulates body wall muscle arm extensions to motor neurons probably by preventing daf-12 isoform b activation. May be involved in thermotolerance. In Caenorhabditis elegans, this protein is 3-ketosteroid oxygenase (daf-9).